The following is a 95-amino-acid chain: MSYTIPAQTRTEIGKGSSRRLRREGKVPAVIYGVGKEPVSIVFDHKDIINIQANDDFYTSVLTIVLDGKEVNVRAQAMQRHVFKPMIDHVDFVYA.

It belongs to the bacterial ribosomal protein bL25 family. Part of the 50S ribosomal subunit; part of the 5S rRNA/L5/L18/L25 subcomplex. Contacts the 5S rRNA. Binds to the 5S rRNA independently of L5 and L18.

This is one of the proteins that binds to the 5S RNA in the ribosome where it forms part of the central protuberance. The polypeptide is Large ribosomal subunit protein bL25 (Shewanella amazonensis (strain ATCC BAA-1098 / SB2B)).